We begin with the raw amino-acid sequence, 32 residues long: Cytochrome b6-f complex subunit 7 (32 aa).

Residues 9 to 27 (AAVFWILIPIGLVGGALLL) form a helical membrane-spanning segment.

The protein belongs to the PetM family. In terms of assembly, the 4 large subunits of the cytochrome b6-f complex are cytochrome b6, subunit IV (17 kDa polypeptide, PetD), cytochrome f and the Rieske protein, while the 4 small subunits are PetG, PetL, PetM and PetN. The complex functions as a dimer.

It localises to the cellular thylakoid membrane. Component of the cytochrome b6-f complex, which mediates electron transfer between photosystem II (PSII) and photosystem I (PSI), cyclic electron flow around PSI, and state transitions. This Prochlorococcus marinus (strain MIT 9515) protein is Cytochrome b6-f complex subunit 7.